A 92-amino-acid chain; its full sequence is DNA/RNA-binding protein Alba (92 aa).

N6-acetyllysine is present on K11.

It belongs to the histone-like Alba family. In terms of processing, acetylated. Acetylation at Lys-11 decreases DNA-binding affinity.

It localises to the cytoplasm. The protein resides in the chromosome. Its function is as follows. Binds double-stranded DNA tightly but without sequence specificity. Involved in DNA compaction. This Pyrobaculum neutrophilum (strain DSM 2338 / JCM 9278 / NBRC 100436 / V24Sta) (Thermoproteus neutrophilus) protein is DNA/RNA-binding protein Alba.